Consider the following 271-residue polypeptide: Probable ribosomal RNA small subunit methyltransferase A (271 aa).

S-adenosyl-L-methionine-binding residues include L12, G37, E58, D83, and N100.

Belongs to the class I-like SAM-binding methyltransferase superfamily. rRNA adenine N(6)-methyltransferase family. RsmA subfamily.

The protein resides in the cytoplasm. Functionally, specifically dimethylates two adjacent adenosines in the loop of a conserved hairpin near the 3'-end of 16S rRNA in the 30S particle. May play a critical role in biogenesis of 30S subunits. This chain is Probable ribosomal RNA small subunit methyltransferase A, found in Methanococcus aeolicus (strain ATCC BAA-1280 / DSM 17508 / OCM 812 / Nankai-3).